A 148-amino-acid polypeptide reads, in one-letter code: Endoribonuclease YbeY (148 aa).

3 residues coordinate Zn(2+): His-113, His-117, and His-123.

Belongs to the endoribonuclease YbeY family. It depends on Zn(2+) as a cofactor.

Its subcellular location is the cytoplasm. In terms of biological role, single strand-specific metallo-endoribonuclease involved in late-stage 70S ribosome quality control and in maturation of the 3' terminus of the 16S rRNA. This is Endoribonuclease YbeY from Borrelia turicatae (strain 91E135).